The chain runs to 177 residues: Large ribosomal subunit protein uL10 (177 aa).

Belongs to the universal ribosomal protein uL10 family. As to quaternary structure, part of the ribosomal stalk of the 50S ribosomal subunit. The N-terminus interacts with L11 and the large rRNA to form the base of the stalk. The C-terminus forms an elongated spine to which L12 dimers bind in a sequential fashion forming a multimeric L10(L12)X complex.

Its function is as follows. Forms part of the ribosomal stalk, playing a central role in the interaction of the ribosome with GTP-bound translation factors. The chain is Large ribosomal subunit protein uL10 from Leptospira interrogans serogroup Icterohaemorrhagiae serovar copenhageni (strain Fiocruz L1-130).